Consider the following 129-residue polypeptide: Defensin-like protein 182 (129 aa).

The signal sequence occupies residues 1 to 26 (METVTSLVFIVNLLIIFTSVVNQARG). Disulfide bonds link Cys-29–Cys-70, Cys-36–Cys-55, Cys-39–Cys-64, Cys-43–Cys-66, Cys-83–Cys-129, Cys-94–Cys-114, Cys-99–Cys-123, and Cys-103–Cys-125.

It belongs to the DEFL family.

The protein localises to the secreted. Functionally, confers broad-spectrum resistance to pathogens. This Arabidopsis thaliana (Mouse-ear cress) protein is Defensin-like protein 182 (PDF3.2).